A 152-amino-acid chain; its full sequence is Putative superoxide dismutase [Cu-Zn] (152 aa).

Cu cation-binding residues include His-43, His-45, and His-60. A disulfide bridge links Cys-54 with Cys-144. Residues His-60, His-68, His-77, and Asp-80 each coordinate Zn(2+). Residue His-118 coordinates Cu cation.

It belongs to the Cu-Zn superoxide dismutase family. Cu cation is required as a cofactor. Zn(2+) serves as cofactor.

It catalyses the reaction 2 superoxide + 2 H(+) = H2O2 + O2. Its function is as follows. Destroys radicals which are normally produced within the cells and which are toxic to biological systems. This Orgyia pseudotsugata (Douglas-fir tussock moth) protein is Putative superoxide dismutase [Cu-Zn] (SOD).